Consider the following 341-residue polypeptide: Endolytic peptidoglycan transglycosylase RlpA (341 aa).

The signal sequence occupies residues 1–26 (MSKRVRSSLILPAVCGLGLAAVLLSS). The N-palmitoyl cysteine moiety is linked to residue Cys-27. A lipid anchor (S-diacylglycerol cysteine) is attached at Cys-27. The 82-residue stretch at 260 to 341 (SLPADGLYLQ…LGQPTLVRPD (82 aa)) folds into the SPOR domain.

Belongs to the RlpA family.

The protein resides in the cell membrane. Its function is as follows. Lytic transglycosylase with a strong preference for naked glycan strands that lack stem peptides. Required for efficient separation of daughter cells and maintenance of rod shape. The protein is Endolytic peptidoglycan transglycosylase RlpA of Pseudomonas aeruginosa (strain UCBPP-PA14).